A 452-amino-acid chain; its full sequence is Isocitrate dehydrogenase [NADP], mitochondrial (452 aa).

Residues 1-39 constitute a mitochondrion transit peptide; sequence MAGYLRVVRSLCRASGSRPAWAPAALTAPTSQEQPRRHY. Lys-45, Lys-48, Lys-67, and Lys-69 each carry N6-acetyllysine. N6-acetyllysine; alternate occurs at positions 80 and 106. Residues Lys-80 and Lys-106 each carry the N6-succinyllysine; alternate modification. NADP(+)-binding positions include 115–117 and Arg-122; that span reads TIT. Thr-117 lines the D-threo-isocitrate pocket. Residues 134–140 and Arg-149 each bind D-threo-isocitrate; that span reads SPNGTIR. At Lys-155 the chain carries N6-acetyllysine. Lys-166 carries the post-translational modification N6-acetyllysine; alternate. Lys-166 is subject to N6-succinyllysine; alternate. D-threo-isocitrate is bound at residue Arg-172. Residues Lys-180 and Lys-193 each carry the N6-acetyllysine; alternate modification. Lys-180 and Lys-193 each carry N6-succinyllysine; alternate. An N6-acetyllysine modification is found at Lys-199. Lys-256 is subject to N6-acetyllysine; alternate. Position 256 is an N6-succinyllysine; alternate (Lys-256). N6-acetyllysine occurs at positions 263, 272, 275, and 280. Position 282 is an N6-acetyllysine; alternate (Lys-282). At Lys-282 the chain carries N6-succinyllysine; alternate. Asp-291 serves as a coordination point for Mn(2+). NADP(+) is bound at residue Lys-299. A Mn(2+)-binding site is contributed by Asp-314. Residues 349–354 and Asn-367 contribute to the NADP(+) site; that span reads GTVTRH. At Lys-384 the chain carries N6-acetyllysine; alternate. Lys-384 carries the post-translational modification N6-succinyllysine; alternate. An N6-acetyllysine mark is found at Lys-400, Lys-413, and Lys-442.

This sequence belongs to the isocitrate and isopropylmalate dehydrogenases family. As to quaternary structure, homodimer. Requires Mg(2+) as cofactor. It depends on Mn(2+) as a cofactor. Post-translationally, acetylation at Lys-413 dramatically reduces catalytic activity. Deacetylated by SIRT3.

The protein resides in the mitochondrion. The catalysed reaction is D-threo-isocitrate + NADP(+) = 2-oxoglutarate + CO2 + NADPH. In terms of biological role, plays a role in intermediary metabolism and energy production. It may tightly associate or interact with the pyruvate dehydrogenase complex. In Homo sapiens (Human), this protein is Isocitrate dehydrogenase [NADP], mitochondrial (IDH2).